The following is a 428-amino-acid chain: Histidinol dehydrogenase (428 aa).

Positions 124, 186, and 209 each coordinate NAD(+). Ser233, Gln255, and His258 together coordinate substrate. Zn(2+) is bound by residues Gln255 and His258. Residues Glu322 and His323 each act as proton acceptor in the active site. Positions 323, 356, 410, and 415 each coordinate substrate. Asp356 is a binding site for Zn(2+). His415 serves as a coordination point for Zn(2+).

It belongs to the histidinol dehydrogenase family. Zn(2+) serves as cofactor.

It catalyses the reaction L-histidinol + 2 NAD(+) + H2O = L-histidine + 2 NADH + 3 H(+). It functions in the pathway amino-acid biosynthesis; L-histidine biosynthesis; L-histidine from 5-phospho-alpha-D-ribose 1-diphosphate: step 9/9. Catalyzes the sequential NAD-dependent oxidations of L-histidinol to L-histidinaldehyde and then to L-histidine. In Bacteroides fragilis (strain YCH46), this protein is Histidinol dehydrogenase.